Reading from the N-terminus, the 308-residue chain is 1,4-dihydroxy-2-naphthoate octaprenyltransferase (308 aa).

The next 9 helical transmembrane spans lie at 22 to 42, 47 to 67, 101 to 121, 129 to 149, 153 to 173, 186 to 206, 235 to 255, 256 to 276, and 286 to 306; these read TLPLALASIFTGSALGYWANP, GLVMVLCLLTTILLQVLSNFA, WGLILMVMASFLSGSFLIGIA, FAFAGLGILAIVAAITYTVGV, GYMGLGDISVLVFFGLLGVGG, IILPAIGSGLLASAVLNINNL, ILLSVAALCYLAFAVATAISW, TNYLFVLAMPLLAKHAIFVYC, and ILAQMSMISLLINILFSLGLL.

It belongs to the MenA family. Type 1 subfamily.

It is found in the cell inner membrane. It carries out the reaction an all-trans-polyprenyl diphosphate + 1,4-dihydroxy-2-naphthoate + H(+) = a 2-demethylmenaquinol + CO2 + diphosphate. It functions in the pathway quinol/quinone metabolism; menaquinone biosynthesis; menaquinol from 1,4-dihydroxy-2-naphthoate: step 1/2. Functionally, conversion of 1,4-dihydroxy-2-naphthoate (DHNA) to demethylmenaquinone (DMK). The sequence is that of 1,4-dihydroxy-2-naphthoate octaprenyltransferase from Haemophilus influenzae (strain ATCC 51907 / DSM 11121 / KW20 / Rd).